Consider the following 176-residue polypeptide: Inner membrane-spanning protein YciB (176 aa).

Helical transmembrane passes span 24–44 (TATAVAIVATLVQIAWVAFRH), 49–69 (PMLWVSLGVVTVFGGATLVLH), 76–96 (WKPTVLYWAFSVALIVSQLAF), 119–139 (LNVVWGVFFVLLGLVNLFVAY), and 149–169 (FKLFGATGCLVVFIVGQSLWL).

Belongs to the YciB family.

The protein localises to the cell inner membrane. Its function is as follows. Plays a role in cell envelope biogenesis, maintenance of cell envelope integrity and membrane homeostasis. The sequence is that of Inner membrane-spanning protein YciB from Paraburkholderia xenovorans (strain LB400).